The chain runs to 71 residues: Protein SlyX homolog (71 aa).

It belongs to the SlyX family.

The chain is Protein SlyX homolog from Thioalkalivibrio sulfidiphilus (strain HL-EbGR7).